We begin with the raw amino-acid sequence, 411 residues long: Adenylosuccinate synthetase (411 aa).

GTP contacts are provided by residues 11–17 (GDEGKGK) and 39–41 (GHT). Catalysis depends on aspartate 12, which acts as the Proton acceptor. Mg(2+)-binding residues include aspartate 12 and glycine 39. IMP-binding positions include 12 to 15 (DEGK), 37 to 40 (NAGH), threonine 121, arginine 135, glutamine 215, threonine 230, and arginine 294. Histidine 40 (proton donor) is an active-site residue. Substrate is bound at residue 290–296 (TTTKRPR). Residues arginine 296, 322–324 (KLD), and 400–402 (STS) contribute to the GTP site.

It belongs to the adenylosuccinate synthetase family. As to quaternary structure, homodimer. Requires Mg(2+) as cofactor.

It localises to the cytoplasm. It carries out the reaction IMP + L-aspartate + GTP = N(6)-(1,2-dicarboxyethyl)-AMP + GDP + phosphate + 2 H(+). It participates in purine metabolism; AMP biosynthesis via de novo pathway; AMP from IMP: step 1/2. Its function is as follows. Plays an important role in the de novo pathway of purine nucleotide biosynthesis. Catalyzes the first committed step in the biosynthesis of AMP from IMP. The chain is Adenylosuccinate synthetase from Helicobacter pylori (strain Shi470).